The sequence spans 498 residues: Calcitonin receptor (498 aa).

The signal sequence occupies residues 1–29 (MRFTLTRWCLTLFIFLNRPLPVLPDSADG). The Extracellular segment spans residues 30–147 (AHTPTLEPEP…FTPDKLQNAY (118 aa)). Intrachain disulfides connect cysteine 56-cysteine 82, cysteine 73-cysteine 113, and cysteine 96-cysteine 135. Residues asparagine 74, asparagine 126, and asparagine 131 are each glycosylated (N-linked (GlcNAc...) asparagine). Residues 148–170 (ILYYLAIVGHSLSILTLLISLGI) form a helical membrane-spanning segment. Topologically, residues 171–198 (FMFLRYFNLLAPFNALLYPTRSISCQRV) are cytoplasmic. The chain crosses the membrane as a helical span at residues 199-219 (TLHKNMFLTYVLNSIIIIVHL). Over 220-236 (VVIVPNGELVKRDPPIC) the chain is Extracellular. An intrachain disulfide couples cysteine 236 to cysteine 306. A helical transmembrane segment spans residues 237-259 (KVLHFFHQYMMSCNYFWMLCEGV). The Cytoplasmic portion of the chain corresponds to 260–276 (YLHTLIVVSVFAEGQRL). A helical transmembrane segment spans residues 277 to 297 (WWYHVLGWGFPLIPTTAHAIT). Over 298–313 (RAVLFNDNCWLSVDTN) the chain is Extracellular. The chain crosses the membrane as a helical span at residues 314 to 337 (LLYIIHGPVMAALVVNFFFLLNIL). Residues 338-357 (RVLVKKLKESQEAESHMYLK) are Cytoplasmic-facing. Residues 358–376 (AVRATLILVPLLGVQFVVL) traverse the membrane as a helical segment. Over 377–384 (PWRPSTPL) the chain is Extracellular. A helical transmembrane segment spans residues 385 to 411 (LGKIYDYVVHSLIHFQGFFVAIIYCFC). Topologically, residues 412-498 (NHEVQGALKR…MEVLEQETSA (87 aa)) are cytoplasmic.

This sequence belongs to the G-protein coupled receptor 2 family. Heterodimer of CALCR and RAMP1, RAMP2 or RAMP3; the receptor complexes function as AMYR1, AMYR2 and AMYR3 receptors, respectively, and respond to amylin/IAPP, calcitonin/CT and CGRP1 ligands. Interacts with GPRASP2.

The protein localises to the cell membrane. Functionally, g protein-coupled receptor activated by ligand peptides amylin (IAPP), calcitonin (CT/CALCA) and calcitonin gene-related peptide type 1 (CGRP1/CALCA). CALCR interacts with receptor-activity-modifying proteins RAMP1, 2 and 3 to form receptor complexes AMYR1, 2 and 3, respectively. IAPP, CT and CGRP1 activate CALCR and AMYRs with distinct modes of receptor activation resulting in specific phenotypes. Ligand binding causes a conformation change that triggers signaling via guanine nucleotide-binding proteins (G proteins) and modulates the activity of downstream effectors. Activates cAMP-dependent pathway. The sequence is that of Calcitonin receptor from Sus scrofa (Pig).